A 162-amino-acid chain; its full sequence is Phosphopantetheine adenylyltransferase (162 aa).

Residue Ser-11 participates in substrate binding. Residues 11-12 and His-19 each bind ATP; that span reads SF. Lys-43, Val-76, and Arg-90 together coordinate substrate. ATP is bound by residues 91 to 93, Glu-101, and 126 to 132; these read GLR and LKFVSSS.

Belongs to the bacterial CoaD family. In terms of assembly, homohexamer. Requires Mg(2+) as cofactor.

The protein resides in the cytoplasm. It catalyses the reaction (R)-4'-phosphopantetheine + ATP + H(+) = 3'-dephospho-CoA + diphosphate. It participates in cofactor biosynthesis; coenzyme A biosynthesis; CoA from (R)-pantothenate: step 4/5. Its function is as follows. Reversibly transfers an adenylyl group from ATP to 4'-phosphopantetheine, yielding dephospho-CoA (dPCoA) and pyrophosphate. This Streptococcus suis (strain 05ZYH33) protein is Phosphopantetheine adenylyltransferase.